A 407-amino-acid chain; its full sequence is Succinate--CoA ligase [ADP-forming] subunit beta, hydrogenosomal (407 aa).

The N-terminal 9 residues, methionine 1 to asparagine 9, are a transit peptide targeting the hydrogenosome. An ATP-grasp domain is found at lysine 18–arginine 261. ATP-binding positions include lysine 55, glycine 62–glycine 64, and glutamate 124. Positions 216 and 230 each coordinate Mg(2+). Residues asparagine 281 and glycine 338–valine 340 each bind substrate.

The protein belongs to the succinate/malate CoA ligase beta subunit family. As to quaternary structure, heterodimer of an alpha and a beta subunit. Mg(2+) serves as cofactor.

The protein localises to the hydrogenosome. The enzyme catalyses succinate + ATP + CoA = succinyl-CoA + ADP + phosphate. It participates in carbohydrate metabolism; tricarboxylic acid cycle; succinate from succinyl-CoA (ligase route): step 1/1. Functionally, succinyl-CoA synthetase functions in the citric acid cycle (TCA), coupling the hydrolysis of succinyl-CoA to the synthesis of ATP and thus represents the only step of substrate-level phosphorylation in the TCA. The beta subunit provides nucleotide specificity of the enzyme and binds the substrate succinate, while the binding sites for coenzyme A and phosphate are found in the alpha subunit. This is Succinate--CoA ligase [ADP-forming] subunit beta, hydrogenosomal from Trichomonas vaginalis.